The primary structure comprises 335 residues: Pregnancy-specific beta-1-glycoprotein 5 (335 aa).

The signal sequence occupies residues 1–34 (MGPLSAPPCTQHITWKGLLLTASLLNFWNLPITA). The region spanning 35–144 (QVTIEALPPK…TGYFTFNLYL (110 aa)) is the Ig-like V-type domain. N-linked (GlcNAc...) asparagine glycosylation is found at Asn-104 and Asn-111. Positions 127-129 (RGD) match the Cell attachment site motif. Ig-like C2-type domains lie at 147-234 (PKPY…VTLN) and 239-317 (PDLP…KSMT). Intrachain disulfides connect Cys-169-Cys-217 and Cys-261-Cys-301. Residues Asn-175 and Asn-210 are each glycosylated (N-linked (GlcNAc...) asparagine).

This sequence belongs to the immunoglobulin superfamily. CEA family. Synthesized by syncytiotrophoblast of the placenta.

It localises to the secreted. In Homo sapiens (Human), this protein is Pregnancy-specific beta-1-glycoprotein 5 (PSG5).